Reading from the N-terminus, the 118-residue chain is MILSMLKAKLHGATVTQCDLHYEGSVSIDQDLLDASGILPHEKVDIWNVTNGARIQTYALEAPRGSRTIGVNGAAARHFAVGDTVIIAAFCGVEAEKARQHAPTVVLLGEGNEIKRAS.

The active-site Schiff-base intermediate with substrate; via pyruvic acid is S25. Position 25 is a pyruvic acid (Ser) (S25). T57 is a substrate binding site. The active-site Proton donor is the Y58. 73–75 (GAA) provides a ligand contact to substrate.

It belongs to the PanD family. Heterooctamer of four alpha and four beta subunits. Pyruvate is required as a cofactor. In terms of processing, is synthesized initially as an inactive proenzyme, which is activated by self-cleavage at a specific serine bond to produce a beta-subunit with a hydroxyl group at its C-terminus and an alpha-subunit with a pyruvoyl group at its N-terminus.

The protein localises to the cytoplasm. The enzyme catalyses L-aspartate + H(+) = beta-alanine + CO2. It participates in cofactor biosynthesis; (R)-pantothenate biosynthesis; beta-alanine from L-aspartate: step 1/1. Its function is as follows. Catalyzes the pyruvoyl-dependent decarboxylation of aspartate to produce beta-alanine. In Hyphomonas neptunium (strain ATCC 15444), this protein is Aspartate 1-decarboxylase.